The chain runs to 273 residues: HMP-PP phosphatase (273 aa).

The Nucleophile role is filled by aspartate 8. Mg(2+)-binding residues include aspartate 8, aspartate 10, and aspartate 212.

Belongs to the HAD-like hydrolase superfamily. Cof family. The cofactor is Mg(2+).

It catalyses the reaction 4-amino-2-methyl-5-(diphosphooxymethyl)pyrimidine + H2O = 4-amino-2-methyl-5-(phosphooxymethyl)pyrimidine + phosphate + H(+). Catalyzes the hydrolysis of 4-amino-2-methyl-5-hydroxymethylpyrimidine pyrophosphate (HMP-PP) to 4-amino-2-methyl-5-hydroxymethylpyrimidine phosphate (HMP-P). This Yersinia pseudotuberculosis serotype O:1b (strain IP 31758) protein is HMP-PP phosphatase.